The sequence spans 245 residues: Tetraspanin-6 (245 aa).

Over methionine 1–serine 19 the chain is Cytoplasmic. The chain crosses the membrane as a helical span at residues valine 20–isoleucine 40. At tryptophan 41–asparagine 59 the chain is on the extracellular side. The helical transmembrane segment at valine 60–phenylalanine 80 threads the bilayer. The Cytoplasmic segment spans residues alanine 81 to tyrosine 93. Residues alanine 94 to phenylalanine 114 form a helical membrane-spanning segment. Over arginine 115–glutamate 208 the chain is Extracellular. Asparagine 134 carries N-linked (GlcNAc...) asparagine glycosylation. Residues methionine 209–leucine 229 traverse the membrane as a helical segment. Over alanine 230 to valine 245 the chain is Cytoplasmic.

This sequence belongs to the tetraspanin (TM4SF) family.

The protein resides in the membrane. The sequence is that of Tetraspanin-6 (TSPAN6) from Homo sapiens (Human).